The primary structure comprises 106 residues: Putative protein SH (106 aa).

The disordered stretch occupies residues 48–106 (HSQQNNSGHQFGDRFHSKGHQDTEGRILWKEASTRTTDSTETADTQLVQRQGNGGICLS). A compositionally biased stretch (basic and acidic residues) spans 58–80 (FGDRFHSKGHQDTEGRILWKEAS). Over residues 81-92 (TRTTDSTETADT) the composition is skewed to low complexity.

In terms of tissue distribution, heart.

Its function is as follows. May be involved with the regulation of GNRH gene expression. It is not known if this protein is transcribed. This Rattus norvegicus (Rat) protein is Putative protein SH.